The chain runs to 122 residues: Small ribosomal subunit protein uS12 (122 aa).

The interval 1–24 (MPTINQLIRKKRKSTGKKRTAPAL) is disordered. Residues 8–20 (IRKKRKSTGKKRT) are compositionally biased toward basic residues. Aspartate 89 carries the post-translational modification 3-methylthioaspartic acid.

The protein belongs to the universal ribosomal protein uS12 family. In terms of assembly, part of the 30S ribosomal subunit. Contacts proteins S8 and S17. May interact with IF1 in the 30S initiation complex.

Functionally, with S4 and S5 plays an important role in translational accuracy. In terms of biological role, interacts with and stabilizes bases of the 16S rRNA that are involved in tRNA selection in the A site and with the mRNA backbone. Located at the interface of the 30S and 50S subunits, it traverses the body of the 30S subunit contacting proteins on the other side and probably holding the rRNA structure together. The combined cluster of proteins S8, S12 and S17 appears to hold together the shoulder and platform of the 30S subunit. The chain is Small ribosomal subunit protein uS12 from Natranaerobius thermophilus (strain ATCC BAA-1301 / DSM 18059 / JW/NM-WN-LF).